The sequence spans 184 residues: Large ribosomal subunit protein uL22B (184 aa).

Residue K46 forms a Glycyl lysine isopeptide (Lys-Gly) (interchain with G-Cter in ubiquitin) linkage. Residue T70 is modified to Phosphothreonine.

It belongs to the universal ribosomal protein uL22 family. As to quaternary structure, component of the large ribosomal subunit (LSU). Mature yeast ribosomes consist of a small (40S) and a large (60S) subunit. The 40S small subunit contains 1 molecule of ribosomal RNA (18S rRNA) and 33 different proteins (encoded by 57 genes). The large 60S subunit contains 3 rRNA molecules (25S, 5.8S and 5S rRNA) and 46 different proteins (encoded by 81 genes). uL22 is associated with the polypeptide exit tunnel.

The protein resides in the cytoplasm. Functionally, component of the ribosome, a large ribonucleoprotein complex responsible for the synthesis of proteins in the cell. The small ribosomal subunit (SSU) binds messenger RNAs (mRNAs) and translates the encoded message by selecting cognate aminoacyl-transfer RNA (tRNA) molecules. The large subunit (LSU) contains the ribosomal catalytic site termed the peptidyl transferase center (PTC), which catalyzes the formation of peptide bonds, thereby polymerizing the amino acids delivered by tRNAs into a polypeptide chain. The nascent polypeptides leave the ribosome through a tunnel in the LSU and interact with protein factors that function in enzymatic processing, targeting, and the membrane insertion of nascent chains at the exit of the ribosomal tunnel. The protein is Large ribosomal subunit protein uL22B of Saccharomyces cerevisiae (strain ATCC 204508 / S288c) (Baker's yeast).